The chain runs to 529 residues: Peptide chain release factor 3 (529 aa).

One can recognise a tr-type G domain in the interval 11-280; it reads SKRRTFAIIS…GLTEWAPAPK (270 aa). Residues 20-27, 88-92, and 142-145 contribute to the GTP site; these read SHPDAGKT, DTPGH, and NKLD.

The protein belongs to the TRAFAC class translation factor GTPase superfamily. Classic translation factor GTPase family. PrfC subfamily.

Its subcellular location is the cytoplasm. Its function is as follows. Increases the formation of ribosomal termination complexes and stimulates activities of RF-1 and RF-2. It binds guanine nucleotides and has strong preference for UGA stop codons. It may interact directly with the ribosome. The stimulation of RF-1 and RF-2 is significantly reduced by GTP and GDP, but not by GMP. This chain is Peptide chain release factor 3, found in Vibrio parahaemolyticus serotype O3:K6 (strain RIMD 2210633).